Consider the following 199-residue polypeptide: Thymidylate kinase (199 aa).

Position 7–14 (G7–S14) interacts with ATP.

The protein belongs to the thymidylate kinase family.

The catalysed reaction is dTMP + ATP = dTDP + ADP. Functionally, phosphorylation of dTMP to form dTDP in both de novo and salvage pathways of dTTP synthesis. The chain is Thymidylate kinase from Thermosipho melanesiensis (strain DSM 12029 / CIP 104789 / BI429).